We begin with the raw amino-acid sequence, 310 residues long: Nitric oxide synthase-interacting protein homolog (310 aa).

Positions phenylalanine 115–arginine 124 are enriched in polar residues. Residues phenylalanine 115–glutamine 141 form a disordered region.

It belongs to the NOSIP family.

The protein resides in the cytoplasm. The protein localises to the nucleus. Functionally, negatively regulates nitric oxide production by inducing nitric oxide synthase translocation to actin cytoskeleton and inhibiting its enzymatic activity. This Caenorhabditis elegans protein is Nitric oxide synthase-interacting protein homolog.